The primary structure comprises 155 residues: uncharacterized protein (155 aa).

Residues 1 to 21 (MFFIVAAGFVIAALIAAIGMA) form the signal peptide. The tract at residues 35–155 (GQTKPATTRP…PVYRPPEEMV (121 aa)) is disordered. Polar residues predominate over residues 118 to 128 (ATASNTPQNEA).

This is an uncharacterized protein from Schizosaccharomyces pombe (strain 972 / ATCC 24843) (Fission yeast).